Here is a 388-residue protein sequence, read N- to C-terminus: DNA primase small subunit PriS (388 aa).

Residues D100, D102, and D288 contribute to the active site.

This sequence belongs to the eukaryotic-type primase small subunit family. As to quaternary structure, heterodimer of a small subunit (PriS) and a large subunit (PriL). Requires Mg(2+) as cofactor. The cofactor is Mn(2+).

Functionally, catalytic subunit of DNA primase, an RNA polymerase that catalyzes the synthesis of short RNA molecules used as primers for DNA polymerase during DNA replication. The small subunit contains the primase catalytic core and has DNA synthesis activity on its own. Binding to the large subunit stabilizes and modulates the activity, increasing the rate of DNA synthesis while decreasing the length of the DNA fragments, and conferring RNA synthesis capability. The DNA polymerase activity may enable DNA primase to also catalyze primer extension after primer synthesis. May also play a role in DNA repair. The chain is DNA primase small subunit PriS from Methanospirillum hungatei JF-1 (strain ATCC 27890 / DSM 864 / NBRC 100397 / JF-1).